Consider the following 641-residue polypeptide: 1-deoxy-D-xylulose-5-phosphate synthase (641 aa).

Thiamine diphosphate contacts are provided by residues His71 and 112 to 114; that span reads SHA. Asp144 is a binding site for Mg(2+). Thiamine diphosphate contacts are provided by residues 145 to 146, Asn174, Tyr285, and Glu366; that span reads GA. Asn174 provides a ligand contact to Mg(2+).

The protein belongs to the transketolase family. DXPS subfamily. As to quaternary structure, homodimer. Mg(2+) is required as a cofactor. The cofactor is thiamine diphosphate.

It catalyses the reaction D-glyceraldehyde 3-phosphate + pyruvate + H(+) = 1-deoxy-D-xylulose 5-phosphate + CO2. It participates in metabolic intermediate biosynthesis; 1-deoxy-D-xylulose 5-phosphate biosynthesis; 1-deoxy-D-xylulose 5-phosphate from D-glyceraldehyde 3-phosphate and pyruvate: step 1/1. Catalyzes the acyloin condensation reaction between C atoms 2 and 3 of pyruvate and glyceraldehyde 3-phosphate to yield 1-deoxy-D-xylulose-5-phosphate (DXP). This Mycobacteroides abscessus (strain ATCC 19977 / DSM 44196 / CCUG 20993 / CIP 104536 / JCM 13569 / NCTC 13031 / TMC 1543 / L948) (Mycobacterium abscessus) protein is 1-deoxy-D-xylulose-5-phosphate synthase.